A 349-amino-acid polypeptide reads, in one-letter code: Protein-glutamate methylesterase/protein-glutamine glutaminase (349 aa).

One can recognise a Response regulatory domain in the interval 5–122 (RVLCVDDSAL…REGMLAYSEL (118 aa)). Position 56 is a 4-aspartylphosphate (Asp-56). The CheB-type methylesterase domain maps to 152-344 (LLSSEKLIAI…QRMLAQISSG (193 aa)). Residues Ser-164, His-190, and Asp-286 contribute to the active site.

The protein belongs to the CheB family. Phosphorylated by CheA. Phosphorylation of the N-terminal regulatory domain activates the methylesterase activity.

The protein localises to the cytoplasm. It catalyses the reaction [protein]-L-glutamate 5-O-methyl ester + H2O = L-glutamyl-[protein] + methanol + H(+). The catalysed reaction is L-glutaminyl-[protein] + H2O = L-glutamyl-[protein] + NH4(+). Functionally, involved in chemotaxis. Part of a chemotaxis signal transduction system that modulates chemotaxis in response to various stimuli. Catalyzes the demethylation of specific methylglutamate residues introduced into the chemoreceptors (methyl-accepting chemotaxis proteins or MCP) by CheR. Also mediates the irreversible deamidation of specific glutamine residues to glutamic acid. This is Protein-glutamate methylesterase/protein-glutamine glutaminase from Yersinia pestis bv. Antiqua (strain Antiqua).